Here is a 588-residue protein sequence, read N- to C-terminus: Adenine deaminase (588 aa).

It belongs to the metallo-dependent hydrolases superfamily. Adenine deaminase family. Homodimer. The cofactor is Mn(2+).

It carries out the reaction adenine + H2O + H(+) = hypoxanthine + NH4(+). This chain is Adenine deaminase, found in Escherichia coli O81 (strain ED1a).